A 2662-amino-acid chain; its full sequence is Centrosome-associated protein CEP250L1 (2662 aa).

2 coiled-coil regions span residues 1030 to 1248 (KVHY…EEEE) and 1281 to 1719 (ARTH…IDAQ).

It localises to the cytoplasm. The protein localises to the cytoskeleton. The protein resides in the microtubule organizing center. It is found in the centrosome. Part of the centrosome inner core complex. Plays a role in the formation and/or stabilization of the mitotic spindle. Required for proper nuclear segregation and DNA partitioning during cell division. This Toxoplasma gondii (strain ATCC 50611 / Me49) protein is Centrosome-associated protein CEP250L1.